The sequence spans 323 residues: Quinolinate synthase (323 aa).

Iminosuccinate is bound by residues histidine 38 and serine 55. Residue cysteine 100 participates in [4Fe-4S] cluster binding. Iminosuccinate contacts are provided by residues 126–128 and serine 143; that span reads YIN. Cysteine 186 serves as a coordination point for [4Fe-4S] cluster. Iminosuccinate contacts are provided by residues 212 to 214 and threonine 229; that span reads HPE. Position 279 (cysteine 279) interacts with [4Fe-4S] cluster.

It belongs to the quinolinate synthase family. Type 2 subfamily. [4Fe-4S] cluster is required as a cofactor.

The protein resides in the cytoplasm. It catalyses the reaction iminosuccinate + dihydroxyacetone phosphate = quinolinate + phosphate + 2 H2O + H(+). It functions in the pathway cofactor biosynthesis; NAD(+) biosynthesis; quinolinate from iminoaspartate: step 1/1. Functionally, catalyzes the condensation of iminoaspartate with dihydroxyacetone phosphate to form quinolinate. In Gloeothece citriformis (strain PCC 7424) (Cyanothece sp. (strain PCC 7424)), this protein is Quinolinate synthase.